Reading from the N-terminus, the 432-residue chain is Histidine--tRNA ligase (432 aa).

It belongs to the class-II aminoacyl-tRNA synthetase family. Homodimer.

Its subcellular location is the cytoplasm. The enzyme catalyses tRNA(His) + L-histidine + ATP = L-histidyl-tRNA(His) + AMP + diphosphate + H(+). This chain is Histidine--tRNA ligase, found in Ralstonia nicotianae (strain ATCC BAA-1114 / GMI1000) (Ralstonia solanacearum).